A 1062-amino-acid chain; its full sequence is Protein P1-P2 (1062 aa).

The N-terminal stretch at Met-1–Ala-20 is a signal peptide. 3 consecutive transmembrane segments (helical) span residues Ala-121 to Ala-141, Ile-144 to Ile-164, and Ala-172 to Trp-192. The Peptidase S39 domain occupies Val-207 to Glu-399. Active-site for protease activity residues include His-255, Asp-286, and Ser-354. Positions Thr-456–Lys-557 are disordered. Polar residues predominate over residues Thr-463–Thr-484. The span at Gln-497–Arg-511 shows a compositional bias: basic residues. Residues Gln-541–Lys-553 are compositionally biased toward polar residues. Residues Glu-859–Lys-974 enclose the RdRp catalytic domain.

Post-translationally, specific enzymatic cleavages in vivo yield mature proteins. The protease probably cleaves itself and releases the RdRp (Potential). Cleavages have been shown in the P1 protein, but since the N-terminus containing the serine protease is shared between P1 and P1-P2, cleavages should also occur within the P1-P2 protein.

It localises to the membrane. The catalysed reaction is RNA(n) + a ribonucleoside 5'-triphosphate = RNA(n+1) + diphosphate. Precursor from which the RNA-dependent RNA polymerase (RdRp) is probably released. RNA-dependent RNA polymerase plays an essential role in virus replication (Potential). This Solanum tuberosum (Potato) protein is Protein P1-P2.